Consider the following 1507-residue polypeptide: DNA-directed RNA polymerase subunit beta' (1507 aa).

Zn(2+) contacts are provided by Cys71, Cys73, Cys86, and Cys89. Positions 470, 472, and 474 each coordinate Mg(2+). Residues Cys800, Cys874, Cys881, and Cys884 each coordinate Zn(2+).

It belongs to the RNA polymerase beta' chain family. The RNAP catalytic core consists of 2 alpha, 1 beta, 1 beta' and 1 omega subunit. When a sigma factor is associated with the core the holoenzyme is formed, which can initiate transcription. Requires Mg(2+) as cofactor. Zn(2+) serves as cofactor.

It carries out the reaction RNA(n) + a ribonucleoside 5'-triphosphate = RNA(n+1) + diphosphate. Functionally, DNA-dependent RNA polymerase catalyzes the transcription of DNA into RNA using the four ribonucleoside triphosphates as substrates. This chain is DNA-directed RNA polymerase subunit beta', found in Nitratiruptor sp. (strain SB155-2).